Consider the following 341-residue polypeptide: Holliday junction branch migration complex subunit RuvB (341 aa).

The tract at residues 1-182 (MKDRLISAVA…FGVISRLEYY (182 aa)) is large ATPase domain (RuvB-L). Residues Leu21, Arg22, Gly63, Lys66, Thr67, Thr68, 129-131 (EDY), Arg172, Tyr182, and Arg219 each bind ATP. Thr67 contacts Mg(2+). Residues 183 to 253 (RPEDLVLIVN…VAVEALKFLE (71 aa)) are small ATPAse domain (RuvB-S). Residues 256–341 (PLGLDFADRR…REETDQVSLW (86 aa)) form a head domain (RuvB-H) region. DNA is bound by residues Arg311 and Arg316.

This sequence belongs to the RuvB family. Homohexamer. Forms an RuvA(8)-RuvB(12)-Holliday junction (HJ) complex. HJ DNA is sandwiched between 2 RuvA tetramers; dsDNA enters through RuvA and exits via RuvB. An RuvB hexamer assembles on each DNA strand where it exits the tetramer. Each RuvB hexamer is contacted by two RuvA subunits (via domain III) on 2 adjacent RuvB subunits; this complex drives branch migration. In the full resolvosome a probable DNA-RuvA(4)-RuvB(12)-RuvC(2) complex forms which resolves the HJ.

It is found in the cytoplasm. It carries out the reaction ATP + H2O = ADP + phosphate + H(+). Its function is as follows. The RuvA-RuvB-RuvC complex processes Holliday junction (HJ) DNA during genetic recombination and DNA repair, while the RuvA-RuvB complex plays an important role in the rescue of blocked DNA replication forks via replication fork reversal (RFR). RuvA specifically binds to HJ cruciform DNA, conferring on it an open structure. The RuvB hexamer acts as an ATP-dependent pump, pulling dsDNA into and through the RuvAB complex. RuvB forms 2 homohexamers on either side of HJ DNA bound by 1 or 2 RuvA tetramers; 4 subunits per hexamer contact DNA at a time. Coordinated motions by a converter formed by DNA-disengaged RuvB subunits stimulates ATP hydrolysis and nucleotide exchange. Immobilization of the converter enables RuvB to convert the ATP-contained energy into a lever motion, pulling 2 nucleotides of DNA out of the RuvA tetramer per ATP hydrolyzed, thus driving DNA branch migration. The RuvB motors rotate together with the DNA substrate, which together with the progressing nucleotide cycle form the mechanistic basis for DNA recombination by continuous HJ branch migration. Branch migration allows RuvC to scan DNA until it finds its consensus sequence, where it cleaves and resolves cruciform DNA. This chain is Holliday junction branch migration complex subunit RuvB, found in Pelotomaculum thermopropionicum (strain DSM 13744 / JCM 10971 / SI).